The primary structure comprises 339 residues: MLDKRAQILLKTLIEHYISDGQPVGSRKLSVASGLDLSPASIRNIMSELEDHGFIASPHTSAGRIPTQRGYRLFVDTLLTVQPLQNQEIRKLENVLSSPDPQELINKAAELLSSLTHFAGLVMIPKRQGAAFRHLEFLPLSEKRILVIIVTTDGAVQNRIILAEKPYSASDLTQASNFFNQHYAGNTLDEVKQKLHEELKQMQSDMTRLMAAALEASSKTADNKDGVVIAGKRNLLDVQDLSTNVSSLRKLFEMFEHRTSLMQLLDQSQKASGVQIFIGGESGYLPLDECSMVTAPYETNGQTIGTLGVIGPTRMAYERVIPIVDITAKLLSNALSNNH.

The protein belongs to the HrcA family.

Its function is as follows. Negative regulator of class I heat shock genes (grpE-dnaK-dnaJ and groELS operons). Prevents heat-shock induction of these operons. The sequence is that of Heat-inducible transcription repressor HrcA from Methylobacillus flagellatus (strain ATCC 51484 / DSM 6875 / VKM B-1610 / KT).